The chain runs to 239 residues: Ribonuclease PH (239 aa).

Phosphate contacts are provided by residues Arg86 and 124–126 (GTR).

The protein belongs to the RNase PH family. In terms of assembly, homohexameric ring arranged as a trimer of dimers.

It carries out the reaction tRNA(n+1) + phosphate = tRNA(n) + a ribonucleoside 5'-diphosphate. Its function is as follows. Phosphorolytic 3'-5' exoribonuclease that plays an important role in tRNA 3'-end maturation. Removes nucleotide residues following the 3'-CCA terminus of tRNAs; can also add nucleotides to the ends of RNA molecules by using nucleoside diphosphates as substrates, but this may not be physiologically important. Probably plays a role in initiation of 16S rRNA degradation (leading to ribosome degradation) during starvation. This chain is Ribonuclease PH, found in Allorhizobium ampelinum (strain ATCC BAA-846 / DSM 112012 / S4) (Agrobacterium vitis (strain S4)).